Consider the following 94-residue polypeptide: MPSVNNYFENKVTSIAFQTATKPATVGVMEIGEYEFGTSEFETMSVVSGALTVKLPESDEWQTFNAGEQFTIEANQKFQVKVEVESAYLCTYGK.

The protein belongs to the nucleoside phosphorylase PpnP family.

The enzyme catalyses a purine D-ribonucleoside + phosphate = a purine nucleobase + alpha-D-ribose 1-phosphate. The catalysed reaction is adenosine + phosphate = alpha-D-ribose 1-phosphate + adenine. It catalyses the reaction cytidine + phosphate = cytosine + alpha-D-ribose 1-phosphate. It carries out the reaction guanosine + phosphate = alpha-D-ribose 1-phosphate + guanine. The enzyme catalyses inosine + phosphate = alpha-D-ribose 1-phosphate + hypoxanthine. The catalysed reaction is thymidine + phosphate = 2-deoxy-alpha-D-ribose 1-phosphate + thymine. It catalyses the reaction uridine + phosphate = alpha-D-ribose 1-phosphate + uracil. It carries out the reaction xanthosine + phosphate = alpha-D-ribose 1-phosphate + xanthine. In terms of biological role, catalyzes the phosphorolysis of diverse nucleosides, yielding D-ribose 1-phosphate and the respective free bases. Can use uridine, adenosine, guanosine, cytidine, thymidine, inosine and xanthosine as substrates. Also catalyzes the reverse reactions. This chain is Pyrimidine/purine nucleoside phosphorylase 2, found in Psychrobacter cryohalolentis (strain ATCC BAA-1226 / DSM 17306 / VKM B-2378 / K5).